The chain runs to 147 residues: 3-dehydroquinate dehydratase (147 aa).

The active-site Proton acceptor is the Tyr23. The substrate site is built by Asn75, His81, and Asp88. His101 serves as the catalytic Proton donor. Substrate-binding positions include Leu102 to Ser103 and Arg112.

The protein belongs to the type-II 3-dehydroquinase family. Homododecamer.

It catalyses the reaction 3-dehydroquinate = 3-dehydroshikimate + H2O. The protein operates within metabolic intermediate biosynthesis; chorismate biosynthesis; chorismate from D-erythrose 4-phosphate and phosphoenolpyruvate: step 3/7. In terms of biological role, catalyzes a trans-dehydration via an enolate intermediate. In Stenotrophomonas maltophilia (strain K279a), this protein is 3-dehydroquinate dehydratase.